The sequence spans 60 residues: Potassium channel toxin alpha-KTx 3.16 (60 aa).

Positions 1-23 are cleaved as a signal peptide; sequence MKVFSAVLIILFVCSMIIGISEG. Intrachain disulfides connect C30–C50, C36–C55, and C40–C57.

The protein belongs to the short scorpion toxin superfamily. Potassium channel inhibitor family. Alpha-KTx 03 subfamily. Expressed by the venom gland.

The protein localises to the secreted. Potassium channel inhibitor. The protein is Potassium channel toxin alpha-KTx 3.16 of Mesobuthus gibbosus (Mediterranean checkered scorpion).